Consider the following 329-residue polypeptide: Acetyl-coenzyme A carboxylase carboxyl transferase subunit alpha (329 aa).

The region spanning 40–294 (QLETLAARRR…KTSILRHLTE (255 aa)) is the CoA carboxyltransferase C-terminal domain.

This sequence belongs to the AccA family. In terms of assembly, acetyl-CoA carboxylase is a heterohexamer composed of biotin carboxyl carrier protein (AccB), biotin carboxylase (AccC) and two subunits each of ACCase subunit alpha (AccA) and ACCase subunit beta (AccD).

It is found in the cytoplasm. It catalyses the reaction N(6)-carboxybiotinyl-L-lysyl-[protein] + acetyl-CoA = N(6)-biotinyl-L-lysyl-[protein] + malonyl-CoA. The protein operates within lipid metabolism; malonyl-CoA biosynthesis; malonyl-CoA from acetyl-CoA: step 1/1. Its function is as follows. Component of the acetyl coenzyme A carboxylase (ACC) complex. First, biotin carboxylase catalyzes the carboxylation of biotin on its carrier protein (BCCP) and then the CO(2) group is transferred by the carboxyltransferase to acetyl-CoA to form malonyl-CoA. The sequence is that of Acetyl-coenzyme A carboxylase carboxyl transferase subunit alpha from Prochlorococcus marinus (strain SARG / CCMP1375 / SS120).